A 182-amino-acid chain; its full sequence is Isopentenyl-diphosphate Delta-isomerase (182 aa).

Mn(2+)-binding residues include histidine 25 and histidine 32. The Nudix hydrolase domain occupies 30 to 164; that stretch reads LLHLAFSSWL…PWAFSPWMVM (135 aa). Residue cysteine 67 is part of the active site. Cysteine 67 is a Mg(2+) binding site. Histidine 69 lines the Mn(2+) pocket. Glutamate 87 serves as a coordination point for Mg(2+). 2 residues coordinate Mn(2+): glutamate 114 and glutamate 116. Residue glutamate 116 is part of the active site.

The protein belongs to the IPP isomerase type 1 family. As to quaternary structure, homodimer. Mg(2+) serves as cofactor. It depends on Mn(2+) as a cofactor.

It localises to the cytoplasm. It catalyses the reaction isopentenyl diphosphate = dimethylallyl diphosphate. It participates in isoprenoid biosynthesis; dimethylallyl diphosphate biosynthesis; dimethylallyl diphosphate from isopentenyl diphosphate: step 1/1. Functionally, catalyzes the 1,3-allylic rearrangement of the homoallylic substrate isopentenyl (IPP) to its highly electrophilic allylic isomer, dimethylallyl diphosphate (DMAPP). This is Isopentenyl-diphosphate Delta-isomerase from Escherichia coli O6:H1 (strain CFT073 / ATCC 700928 / UPEC).